A 337-amino-acid polypeptide reads, in one-letter code: Mitochondrial amidoxime-reducing component 1 (337 aa).

Residue G2 is the site of N-myristoyl glycine attachment. Over 2-20 (GAAGSSALARFVLLAQSRP) the chain is Mitochondrial matrix. A helical; Signal-anchor for type II membrane protein transmembrane segment spans residues 21-40 (GWLGVAALGLTAVALGAVAW). Residues 41–337 (RRAWPTRRRR…VGDPVYLLGQ (297 aa)) lie on the Cytoplasmic side of the membrane. Residues K67, S68, and R92 each contribute to the Mo-molybdopterin site. The tract at residues 93 to 183 (FWLVINQEGN…KSQPYRLVHF (91 aa)) is MOSC N-terminal region. The MOSC domain occupies 187-335 (MRPRRPHQIA…IKVGDPVYLL (149 aa)). Residues T210, S211, R238, N240, S271, R272, C273, and Y317 each coordinate Mo-molybdopterin.

As to quaternary structure, component of a complex composed of cytochrome b5, NADH-cytochrome b5 reductase and MTARC1. Mo-molybdopterin is required as a cofactor.

It is found in the mitochondrion outer membrane. The protein localises to the membrane. The enzyme catalyses N(omega)-hydroxy-L-arginine + 2 Fe(II)-[cytochrome b5] + 2 H(+) = L-arginine + 2 Fe(III)-[cytochrome b5] + H2O. Catalyzes the reduction of N-oxygenated molecules, acting as a counterpart of cytochrome P450 and flavin-containing monooxygenases in metabolic cycles. As a component of prodrug-converting system, reduces a multitude of N-hydroxylated prodrugs particularly amidoximes, leading to increased drug bioavailability. May be involved in mitochondrial N(omega)-hydroxy-L-arginine (NOHA) reduction, regulating endogenous nitric oxide levels and biosynthesis. Postulated to cleave the N-OH bond of N-hydroxylated substrates in concert with electron transfer from NADH to cytochrome b5 reductase then to cytochrome b5, the ultimate electron donor that primes the active site for substrate reduction. The protein is Mitochondrial amidoxime-reducing component 1 of Homo sapiens (Human).